A 243-amino-acid polypeptide reads, in one-letter code: Small ribosomal subunit protein uS3 (243 aa).

Positions Ile39–Glu110 constitute a KH type-2 domain. Positions Gly221–Ser243 are disordered. A compositionally biased stretch (basic and acidic residues) spans Gln233–Ser243.

This sequence belongs to the universal ribosomal protein uS3 family. As to quaternary structure, part of the 30S ribosomal subunit. Forms a tight complex with proteins S10 and S14.

Functionally, binds the lower part of the 30S subunit head. Binds mRNA in the 70S ribosome, positioning it for translation. This Prochlorococcus marinus subsp. pastoris (strain CCMP1986 / NIES-2087 / MED4) protein is Small ribosomal subunit protein uS3.